The sequence spans 360 residues: Nucleoporin SEH1 (360 aa).

6 WD repeats span residues 10–49 (DHKD…DWHC), 55–96 (THSG…SNDK), 111–152 (DSRT…NLSQ), 160–210 (SCKL…RKYA), 217–258 (TVTD…KELT), and 276–315 (NHNS…NWKC). Lysine 12 participates in a covalent cross-link: Glycyl lysine isopeptide (Lys-Gly) (interchain with G-Cter in SUMO2). A phosphoserine mark is found at serine 179 and serine 190. The segment covering 324–354 (SPVNGSSQQGTSNPSLGSNIPSLQNSLNGSS) has biased composition (polar residues). The segment at 324–360 (SPVNGSSQQGTSNPSLGSNIPSLQNSLNGSSAGRKHS) is disordered.

It belongs to the WD repeat SEC13 family. As to quaternary structure, component of the Nup107-160 subcomplex of the nuclear pore complex (NPC). The Nup107-160 subcomplex includes NUP160, NUP133, NUP107, NUP98, NUP85, NUP43, NUP37, SEH1 and SEC13. The SEH1 subunit appears to be only weakly associated with the Nup107-160 subcomplex. Component of the GATOR2 subcomplex, composed of MIOS, SEC13, SEH1L, WDR24 and WDR59. The GATOR2 complex interacts with CASTOR1 and CASTOR2; the interaction is negatively regulated by arginine. The GATOR2 complex interacts with SESN1, SESN2 and SESN3; the interaction is negatively regulated by amino acids. SESN1, SESN2 and SESN3 convey leucine availability via direct interaction with SEH1L and WDR24.

Its subcellular location is the chromosome. The protein resides in the centromere. It localises to the kinetochore. The protein localises to the nucleus. It is found in the nuclear pore complex. Its subcellular location is the lysosome membrane. Its activity is regulated as follows. The GATOR2 complex is negatively regulated by the upstream amino acid sensors CASTOR1 and SESN2, which sequester the GATOR2 complex in absence of amino acids. In the presence of abundant amino acids, GATOR2 is released from CASTOR1 and SESN2 and activated. Component of the Nup107-160 subcomplex of the nuclear pore complex (NPC). The Nup107-160 subcomplex is required for the assembly of a functional NPC. The Nup107-160 subcomplex is also required for normal kinetochore microtubule attachment, mitotic progression and chromosome segregation. This subunit plays a role in recruitment of the Nup107-160 subcomplex to the kinetochore. Functionally, as a component of the GATOR2 complex, functions as an activator of the amino acid-sensing branch of the mTORC1 signaling pathway. The GATOR2 complex indirectly activates mTORC1 through the inhibition of the GATOR1 subcomplex. GATOR2 probably acts as an E3 ubiquitin-protein ligase toward GATOR1. In the presence of abundant amino acids, the GATOR2 complex mediates ubiquitination of the NPRL2 core component of the GATOR1 complex, leading to GATOR1 inactivation. In the absence of amino acids, GATOR2 is inhibited, activating the GATOR1 complex. Within the GATOR2 complex, SEC13 and SEH1L are required to stabilize the complex. The polypeptide is Nucleoporin SEH1 (SEH1L) (Pongo abelii (Sumatran orangutan)).